The chain runs to 390 residues: GTPase Obg (390 aa).

An Obg domain is found at 1–159 (MKFVDEASIL…RELLLELMLL (159 aa)). The disordered stretch occupies residues 127–147 (NTRFKSSVNRTPRQKTNGTPG). Residues 129 to 145 (RFKSSVNRTPRQKTNGT) are compositionally biased toward polar residues. Positions 160-333 (ADVGMLGMPN…LCWDVMTFII (174 aa)) constitute an OBG-type G domain. GTP contacts are provided by residues 166–173 (GMPNAGKS), 191–195 (FTTLV), 213–216 (DIPG), 283–286 (NKID), and 314–316 (SAA). Residues serine 173 and threonine 193 each contribute to the Mg(2+) site.

This sequence belongs to the TRAFAC class OBG-HflX-like GTPase superfamily. OBG GTPase family. As to quaternary structure, monomer. Mg(2+) serves as cofactor.

It is found in the cytoplasm. An essential GTPase which binds GTP, GDP and possibly (p)ppGpp with moderate affinity, with high nucleotide exchange rates and a fairly low GTP hydrolysis rate. Plays a role in control of the cell cycle, stress response, ribosome biogenesis and in those bacteria that undergo differentiation, in morphogenesis control. This is GTPase Obg from Escherichia coli O7:K1 (strain IAI39 / ExPEC).